Reading from the N-terminus, the 229-residue chain is 5'-methylthioadenosine/S-adenosylhomocysteine nucleosidase (229 aa).

Glu-12 (proton acceptor) is an active-site residue. Residues Gly-78, Ile-152, and 173-174 (ME) contribute to the substrate site. Asp-197 serves as the catalytic Proton donor.

The protein belongs to the PNP/UDP phosphorylase family. MtnN subfamily.

The enzyme catalyses S-adenosyl-L-homocysteine + H2O = S-(5-deoxy-D-ribos-5-yl)-L-homocysteine + adenine. The catalysed reaction is S-methyl-5'-thioadenosine + H2O = 5-(methylsulfanyl)-D-ribose + adenine. It catalyses the reaction 5'-deoxyadenosine + H2O = 5-deoxy-D-ribose + adenine. Its pathway is amino-acid biosynthesis; L-methionine biosynthesis via salvage pathway; S-methyl-5-thio-alpha-D-ribose 1-phosphate from S-methyl-5'-thioadenosine (hydrolase route): step 1/2. Its function is as follows. Catalyzes the irreversible cleavage of the glycosidic bond in both 5'-methylthioadenosine (MTA) and S-adenosylhomocysteine (SAH/AdoHcy) to adenine and the corresponding thioribose, 5'-methylthioribose and S-ribosylhomocysteine, respectively. Also cleaves 5'-deoxyadenosine, a toxic by-product of radical S-adenosylmethionine (SAM) enzymes, into 5-deoxyribose and adenine. This is 5'-methylthioadenosine/S-adenosylhomocysteine nucleosidase from Histophilus somni (strain 129Pt) (Haemophilus somnus).